The primary structure comprises 368 residues: Probable dual-specificity RNA methyltransferase RlmN (368 aa).

The active-site Proton acceptor is Glu111. Residues 117 to 355 (YPNRATLCIS…CTVRDTRGQE (239 aa)) form the Radical SAM core domain. The cysteines at positions 124 and 360 are disulfide-linked. [4Fe-4S] cluster contacts are provided by Cys131, Cys135, and Cys138. S-adenosyl-L-methionine contacts are provided by residues 181–182 (GE), Ser215, 238–240 (SLH), and Asn317. The active-site S-methylcysteine intermediate is the Cys360.

Belongs to the radical SAM superfamily. RlmN family. [4Fe-4S] cluster serves as cofactor.

It localises to the cytoplasm. The enzyme catalyses adenosine(2503) in 23S rRNA + 2 reduced [2Fe-2S]-[ferredoxin] + 2 S-adenosyl-L-methionine = 2-methyladenosine(2503) in 23S rRNA + 5'-deoxyadenosine + L-methionine + 2 oxidized [2Fe-2S]-[ferredoxin] + S-adenosyl-L-homocysteine. It carries out the reaction adenosine(37) in tRNA + 2 reduced [2Fe-2S]-[ferredoxin] + 2 S-adenosyl-L-methionine = 2-methyladenosine(37) in tRNA + 5'-deoxyadenosine + L-methionine + 2 oxidized [2Fe-2S]-[ferredoxin] + S-adenosyl-L-homocysteine. In terms of biological role, specifically methylates position 2 of adenine 2503 in 23S rRNA and position 2 of adenine 37 in tRNAs. This chain is Probable dual-specificity RNA methyltransferase RlmN, found in Corynebacterium diphtheriae (strain ATCC 700971 / NCTC 13129 / Biotype gravis).